Reading from the N-terminus, the 81-residue chain is MKTLLLTLVVVTIVCLDLGYTLKCNKLVPLFYKTCPAGKNLCYKIFMVATPKVPVKRGCIDVCPKNSALVKYVCCNTDRCN.

The N-terminal stretch at 1 to 21 is a signal peptide; it reads MKTLLLTLVVVTIVCLDLGYT. 4 disulfides stabilise this stretch: Cys24/Cys42, Cys35/Cys59, Cys63/Cys74, and Cys75/Cys80.

Belongs to the three-finger toxin family. Short-chain subfamily. Type IA cytotoxin sub-subfamily. In terms of assembly, monomer in solution; Homodimer and oligomer in the presence of negatively charged lipids forming a pore with a size ranging between 20 and 30 Angstroms. Expressed by the venom gland.

Its subcellular location is the secreted. The protein resides in the target cell membrane. Functionally, shows cytolytic activity on many different cells by forming pore in lipid membranes. In vivo, increases heart rate or kills the animal by cardiac arrest. In addition, it binds to heparin with high affinity, interacts with Kv channel-interacting protein 1 (KCNIP1) in a calcium-independent manner, and binds to integrin alpha-V/beta-3 (ITGAV/ITGB3) with moderate affinity. This chain is Cytotoxin 2, found in Naja kaouthia (Monocled cobra).